A 20-amino-acid polypeptide reads, in one-letter code: Cytochrome P450 3A5 (20 aa).

Belongs to the cytochrome P450 family. The cofactor is heme.

The protein localises to the endoplasmic reticulum membrane. It localises to the microsome membrane. It carries out the reaction an organic molecule + reduced [NADPH--hemoprotein reductase] + O2 = an alcohol + oxidized [NADPH--hemoprotein reductase] + H2O + H(+). In terms of biological role, 6-beta-testosterone hydroxylase. The protein is Cytochrome P450 3A5 of Papio sp. (Baboon).